A 2269-amino-acid polypeptide reads, in one-letter code: MAHGLAPRSSELRVTESPMLSCQLSFKTEIHDRRTNLVPAPAATLARSSREAEESKICKIYTDWANHYLAKSGCPRLIKDLTQDIPDGVLLAEIIQIIANEKIEDINSCPKSHSQMIENVECCLSFLGARGVSVQGLSAEEVCNGNLKSILGLFFILSRYKQQQQHQQQYLQSLVELQQHVTHQTTGAAQLSQHKTQDMQSSLTARYTSPPGHSGIAAPQKKNTRLPGPSRVPAAGSGSNSSKGSSNLNRRSQSFNSIDKSKPLQYASGNDRGSMNGSGSVPSSTSGQQLASAIPSPTAGKTWRSKSMNMKHSATSSMLATKPPSPTSSPTPPSSSDRLRPPITDASKSAPGNQRSMLEKFRILNPRATSRTSPSVAEMALQEEDDLSEFGDEGTFSPTPPCGISKQQGKPSASAFAPPSKSNNCKNHNNKSLPQPKDKEDKNKTKNKASTPPKEEPVIVETSKKGSKIASLIPKGSKTSAASVKKESAIPASSSIPKPGLKAPTATSKPAGTQSCVPATTGGEKTKLNKGSQSIYMQRSLGGLENRKTSMVLSTSTSALSASTTSGLGGGCALGGNGAVQLPQQQQHNHPNTATVAPFMYRTYSENDCTTVVPPEPCLSPTKELVYGKTAKQCLEEISGEDPETRRMRTVKNIADLRQNLEETMSSLRGTQITHSTLETTFDTTVTTEVNGRGLPALSSRSSPMSWRLGQGSSPRLQAGDAPSYTPPRSSAGSTTVRYGEPSRLLYTAPLRRAAASGARGAEPGEKGGISEVGPEVDVTGYGSDGDILAKNVHADDISGYHTDGGIYSRNVDLYSRNVGRPAEMTPAREVVQKGVKEMQGEDSWDDSSSVSSGLSDTLDNISTDDLNPAPYSGISSRKSKAAQSNKETHRHIEQDASSWAGAEDLKKVDEEMEPGMDPSCKWKTSSPSSSCQGEDISQKTGLPMSQTGSWRRGMSAQVGITPPRTKGTSTSLKTPGKTDDAKASEKGKGSPKSPSIQRSPSDAGKSSGDEGKKPPSGIARPPTTSSFGYKKIPGPAGALITASGATLTSGSATLGKVPKSACIGKSTGISNGRKTSLDGAQHQDDAVLLGCGGSEVPLQYRSLPRPAKSSSGGSSVVSRSGHRSSSSSIDSNVSGKSAGGSGVAVGTPTSTKRRDTGKVGSGRSSPVTINQTDKEKVAGSDQEGTGLPTSPKSSPTSTQSGLRQPGSKYPDIASPTFRRLFGSKASSKPSSPGTPDSGKCPSALGSPHGTLARQASLDSPSSGTGSLGSMGGQSGGSSPLYGKTPDLGTDSPASSPASGLSLPSNARPWPPNLSSSSAGSKDTLSCHSMTSLHTSSESIDLPLPHHHGPKVTRTGSVKSTLSEGMPLDRNTLPKKGLRQTSHEEGKEWLRSHSTGGLQDTGSPLSPPGTTCANAGKYHYSNLLSPTSMSQYNIPSTSMSRSNSIPAQDSFELYGEGHPLGGSATSLEERPRGMSRSGSFRDSTDEVHGSSLSLVSSTSSLYSAQIRKLRRELDASQEKVATLTSQLAANAHLVAAFEKSLANMTCRLQSLTMTAEQKESELAELRETIEALKTQNTDAQTAIQVALNGPDHVHRDLRIRRQHSSESMSSINSAASHSSLGSAKDAEDKKKKKKSWLRSSFKQAFSKKKTNKPQSSHDEIEEMTDSSLPSSPKLLHISRQASSPQPLLSSPSTTELCECTEAEAEIILQLKNELREKELKLTDIRLEALSSAHHLDQIREAMNRMQNEIELLKAENDRLKSSGNTTPAATPAKTARPPSETSSTSSSSSRQSLGLSLNNLNITDTIMSDILLDDGYEGNLRKEGRSVRIVVTINSDSNKTKAMQKKQYLIGSIGVSGKTKWDVLDGVIRRLFKEYVFRVDPLTSLGMNSDSIVCYRMGDVVRSHASEVPELLPCGYLVGDNNVITVTLKGVKEGSIDDLVFDTLIPKPIIQRYLNLLMEHRRIILSGPSGTGKSYLATKLAYFILSKTGREVTDTNLATFNVDQKSSKDLRQYLSSLAEQCNTEECEIELPTVVILDNLHHIGSLSDIFNGFLNCKYHKCPYVIGTMNQGVSSSPNLELHHNFRWVLCANHTEPVKGFLGRFLRRKLIETEIDKNMRSNDLIKIIDWIPKIWQHLNSFLEAHSSSDVTIGPRLFLSCPMDADGSRVWFTDLWNYSLVPYLLEAVREGLQHEGQSLLQLRPEDVGYDGYSSSKDGAASKQVSQSDTEGDPLMNMLMRLQEAANYSSAQSCDSDSASHHEDLLDSSLESAL.

A Calponin-homology (CH) domain is found at Ser55–Gln162. Polar residues predominate over residues Thr186 to Tyr207. Disordered regions lie at residues Thr186–Leu358 and Ser388–Ser532. Over residues Gly236–Ser252 the composition is skewed to low complexity. Composition is skewed to polar residues over residues Ala267–Ala291 and Ser305–Leu319. Positions Pro323–Pro333 are enriched in pro residues. The segment covering Ala346–Ser356 has biased composition (polar residues). A compositionally biased stretch (low complexity) spans Pro411 to Ser432. Over residues Thr505–Pro518 the composition is skewed to polar residues. Residues Glu644–Gln672 are a coiled coil. Disordered stretches follow at residues Gly692–Val737, Ala756–Glu776, Val836–Pro1036, Ser1050–Asp1079, Val1097–Cys1412, and Gly1461–Val1487. Composition is skewed to polar residues over residues Ser699 to Arg716 and Pro727 to Val737. The span at Asp847–Asp860 shows a compositional bias: low complexity. Residues Gly874–Asn886 are compositionally biased toward polar residues. A compositionally biased stretch (low complexity) spans Pro919–Cys932. Residues Gln939–Ser950 show a composition bias toward polar residues. A compositionally biased stretch (basic and acidic residues) spans Gly977–Lys989. Over residues Ser1110 to Lys1137 the composition is skewed to low complexity. Polar residues predominate over residues Gly1163–Gln1172. 2 stretches are compositionally biased toward low complexity: residues Gly1185–Gly1202 and Gly1223–Gly1234. The span at Gly1266–Gly1276 shows a compositional bias: gly residues. Positions Ser1292–Ser1305 are enriched in low complexity. Polar residues-rich tracts occupy residues Asn1313 to Ser1339 and Arg1354 to Ser1363. The span at Thr1381–Arg1391 shows a compositional bias: basic and acidic residues. Positions Ser1392 to Cys1412 are enriched in polar residues. The stretch at Ser1499–Ala1586 forms a coiled coil. Disordered regions lie at residues Gln1602 to Pro1672, Asn1756 to Ser1792, and Gly2207 to Leu2269. 2 stretches are compositionally biased toward low complexity: residues Ser1605–Ala1623 and Thr1765–Ser1792. Positions Cys1697–Thr1765 form a coiled coil. A compositionally biased stretch (polar residues) spans Tyr2208–Asp2224.

The protein belongs to the Nav/unc-53 family. In terms of assembly, interacts with F-actin.

The protein resides in the nucleus outer membrane. The protein localises to the golgi apparatus. It is found in the cell projection. It localises to the lamellipodium. Its subcellular location is the filopodium. Functionally, involved in liver and heart organogenesis during embryo development. Plays a role in the migration of hepatoblasts from the intestinal endoderm during liver organogenesis; possibly by modulating actin polymerization during hepatoblast outgrowth. May be involved in neuron regeneration. The chain is Neuron navigator 3 (nav3) from Danio rerio (Zebrafish).